A 52-amino-acid polypeptide reads, in one-letter code: UPF0391 membrane protein ACIAD3602 (52 aa).

The next 2 helical transmembrane spans lie at 6-26 (IIFA…VAGL) and 30-50 (FAVI…ISRG).

The protein belongs to the UPF0391 family.

It localises to the cell membrane. The sequence is that of UPF0391 membrane protein ACIAD3602 from Acinetobacter baylyi (strain ATCC 33305 / BD413 / ADP1).